The sequence spans 359 residues: Molybdenum import ATP-binding protein ModC (359 aa).

The ABC transporter domain maps to Met-1–Val-233. ATP is bound at residue Gly-32–Thr-39. Residues Ala-289–Ala-355 form the Mop domain.

It belongs to the ABC transporter superfamily. Molybdate importer (TC 3.A.1.8) family. As to quaternary structure, the complex is composed of two ATP-binding proteins (ModC), two transmembrane proteins (ModB) and a solute-binding protein (ModA).

The protein localises to the cell inner membrane. It catalyses the reaction molybdate(out) + ATP + H2O = molybdate(in) + ADP + phosphate + H(+). Part of the ABC transporter complex ModABC involved in molybdenum import. Responsible for energy coupling to the transport system. This Brucella abortus (strain 2308) protein is Molybdenum import ATP-binding protein ModC.